Here is a 365-residue protein sequence, read N- to C-terminus: Glycolaldehyde reductase (365 aa).

NAD(+) is bound by residues D37, G94, K95, T116, S119, S125, L127, and Y131. The Zn(2+) site is built by D171, H254, and H271.

This sequence belongs to the iron-containing alcohol dehydrogenase family. Zn(2+) serves as cofactor.

It carries out the reaction ethylene glycol + NAD(+) = glycolaldehyde + NADH + H(+). Is subject to substrate inhibition. In terms of biological role, oxidoreductase involved in the non-carboxylating pentose bisphosphate pathway, a nucleoside degradation pathway present in some halophilic archaea. Catalyzes the reduction of glycolaldehyde to ethylene glycol. Cannot catalyze the oxidation of glycerol 1-phosphate nor the reduction of dihydroxyacetone phosphate (DHAP). This chain is Glycolaldehyde reductase, found in Halobacterium salinarum (strain ATCC 700922 / JCM 11081 / NRC-1) (Halobacterium halobium).